Here is a 108-residue protein sequence, read N- to C-terminus: Complement inhibitor CirpT2 (108 aa).

The N-terminal stretch at 1–19 is a signal peptide; that stretch reads MRTLVASLCVFAVFSAVCC. 4 disulfides stabilise this stretch: C40-C64, C59-C98, C76-C99, and C85-C104.

The protein belongs to the CirpT family. As to expression, expressed in salivary glands.

Its subcellular location is the secreted. Its function is as follows. Complement inhibitor. Prevents complement-mediated activation of C5 by sterically preventing direct binding of C5 to its convertase (binding with domains MG4 and MG5). Binds C5 at a different binding site than the other tick complement inhibitors OmCI and RaCI3, and the drug eculizumab. Inhibits the complement in human, rat and guinea pig, and also shows a reduced inhibition in rabbit and pig. The chain is Complement inhibitor CirpT2 from Dermacentor andersoni (Rocky mountain wood tick).